A 124-amino-acid polypeptide reads, in one-letter code: Putative iron-sulfur cluster insertion protein ErpA 2 (124 aa).

3 residues coordinate iron-sulfur cluster: C52, C116, and C118.

This sequence belongs to the HesB/IscA family. As to quaternary structure, homodimer. The cofactor is iron-sulfur cluster.

Required for insertion of 4Fe-4S clusters. In Burkholderia vietnamiensis (strain G4 / LMG 22486) (Burkholderia cepacia (strain R1808)), this protein is Putative iron-sulfur cluster insertion protein ErpA 2.